A 458-amino-acid chain; its full sequence is Plant UBX domain-containing protein 2 (458 aa).

Positions 1 to 103 (MDDVKDKLKG…APQDGFDPYG (103 aa)) are disordered. The segment covering 44–54 (PIQNRFNSSQA) has biased composition (polar residues). The segment covering 56–70 (NPTPRPKPNPNPLPE) has biased composition (pro residues). The segment covering 74–85 (SSSDQKISGSTR) has biased composition (polar residues). The C2H2-type; atypical zinc-finger motif lies at 121–143 (FECPICKNPFTSEEEVSVHVESC). Positions 181–248 (SSIDVLLRLF…EIWAVMDVPS (68 aa)) constitute a PUB domain. Residues 349–433 (KRYKRSMIRV…ELVPSALIRF (85 aa)) enclose the UBX domain.

In terms of assembly, interacts with CDC48A in vitro and co-fractionates with membrane-associated but not soluble CDC48A in vivo.

It is found in the membrane. Its function is as follows. Facilitates the interaction of SYP31 and CDC48A, thereby regulating an CDC48A membrane-associated function. Appears to act as a negative regulator mediating the powdery mildew-plant interaction. The protein is Plant UBX domain-containing protein 2 of Arabidopsis thaliana (Mouse-ear cress).